A 293-amino-acid polypeptide reads, in one-letter code: MPWIQLRINTNSDHADAIGDILMEQGAVSITYEDGKDTPIFEPKLGETPLWQDTVVVALFDAGTDLAPTVALLATSPMLGENFPHKIEQIEDKDWVREWMDSFHPIQFGTRLWICPSWREIPHPDAVNVILDPGLAFGTGTHPTTALCLEWLDSLDLSDEEVIDFGCGSGILAIAALKLGAKKVTGVDIDYQAIDASQANAVRNNVQDQLALYLPEDQPEGLIADVLVANILAGPLRELAPLIAEKVRQGGKLALSGLLQEQAEELAEFYSQWFQMDPPAYKDDWSRLTGIRK.

S-adenosyl-L-methionine contacts are provided by Thr-145, Gly-166, Asp-188, and Asn-230.

Belongs to the methyltransferase superfamily. PrmA family.

The protein localises to the cytoplasm. It carries out the reaction L-lysyl-[protein] + 3 S-adenosyl-L-methionine = N(6),N(6),N(6)-trimethyl-L-lysyl-[protein] + 3 S-adenosyl-L-homocysteine + 3 H(+). Methylates ribosomal protein L11. The protein is Ribosomal protein L11 methyltransferase of Shewanella denitrificans (strain OS217 / ATCC BAA-1090 / DSM 15013).